The primary structure comprises 227 residues: Cytidylate kinase (227 aa).

12-20 (GPSGSGKGT) provides a ligand contact to ATP.

It belongs to the cytidylate kinase family. Type 1 subfamily.

It localises to the cytoplasm. The catalysed reaction is CMP + ATP = CDP + ADP. It catalyses the reaction dCMP + ATP = dCDP + ADP. The sequence is that of Cytidylate kinase from Nitrosococcus oceani (strain ATCC 19707 / BCRC 17464 / JCM 30415 / NCIMB 11848 / C-107).